Reading from the N-terminus, the 328-residue chain is Nucleotide-binding protein Blon_1085/BLIJ_1109 (328 aa).

A disordered region spans residues 1-33; the sequence is MSQQTTIRDTGEAAATNAPANSATSTSTPDNQP. Positions 13-29 are enriched in low complexity; the sequence is AAATNAPANSATSTSTP. 46–53 is an ATP binding site; the sequence is GMSGAGRS. 101 to 104 provides a ligand contact to GTP; it reads DVRS.

The protein belongs to the RapZ-like family.

Displays ATPase and GTPase activities. The chain is Nucleotide-binding protein Blon_1085/BLIJ_1109 from Bifidobacterium longum subsp. infantis (strain ATCC 15697 / DSM 20088 / JCM 1222 / NCTC 11817 / S12).